A 454-amino-acid polypeptide reads, in one-letter code: 3-phosphoshikimate 1-carboxyvinyltransferase (454 aa).

Residues 1 to 31 (MSENHSEGASRPVISRRPAAGLRADHPVHVP) form a disordered region. Positions 34, 35, and 39 each coordinate 3-phosphoshikimate. Lysine 34 lines the phosphoenolpyruvate pocket. Phosphoenolpyruvate contacts are provided by glycine 107 and arginine 135. Serine 180, glutamine 182, aspartate 334, and lysine 361 together coordinate 3-phosphoshikimate. Residue glutamine 182 coordinates phosphoenolpyruvate. The Proton acceptor role is filled by aspartate 334. Residues arginine 365 and arginine 409 each contribute to the phosphoenolpyruvate site.

This sequence belongs to the EPSP synthase family. In terms of assembly, monomer.

It localises to the cytoplasm. The catalysed reaction is 3-phosphoshikimate + phosphoenolpyruvate = 5-O-(1-carboxyvinyl)-3-phosphoshikimate + phosphate. The protein operates within metabolic intermediate biosynthesis; chorismate biosynthesis; chorismate from D-erythrose 4-phosphate and phosphoenolpyruvate: step 6/7. Functionally, catalyzes the transfer of the enolpyruvyl moiety of phosphoenolpyruvate (PEP) to the 5-hydroxyl of shikimate-3-phosphate (S3P) to produce enolpyruvyl shikimate-3-phosphate and inorganic phosphate. This chain is 3-phosphoshikimate 1-carboxyvinyltransferase, found in Granulibacter bethesdensis (strain ATCC BAA-1260 / CGDNIH1).